The primary structure comprises 96 residues: MKIRPLHDRVIVRRMEEEKTSSGGIVIPDTAAEKPIRGEVVAVGNGKILESGEVRALDVKVGDKVLFGKYSGTDVKVESEELLVMREDDIMAVLEG.

This sequence belongs to the GroES chaperonin family. As to quaternary structure, heptamer of 7 subunits arranged in a ring. Interacts with the chaperonin GroEL.

It is found in the cytoplasm. Functionally, together with the chaperonin GroEL, plays an essential role in assisting protein folding. The GroEL-GroES system forms a nano-cage that allows encapsulation of the non-native substrate proteins and provides a physical environment optimized to promote and accelerate protein folding. GroES binds to the apical surface of the GroEL ring, thereby capping the opening of the GroEL channel. The chain is Co-chaperonin GroES from Nitrosococcus oceani (strain ATCC 19707 / BCRC 17464 / JCM 30415 / NCIMB 11848 / C-107).